The chain runs to 335 residues: uncharacterized protein (335 aa).

The segment at 201–236 (GPMAKNKARRKEDNYDTHNCDDANQDKKEEAEGKNT) is disordered. Residues 210-235 (RKEDNYDTHNCDDANQDKKEEAEGKN) are compositionally biased toward basic and acidic residues.

Functionally, dispensable for normal development and fertility. This is an uncharacterized protein from Homo sapiens (Human).